Here is a 396-residue protein sequence, read N- to C-terminus: Elongation factor Tu (396 aa).

Residues 10 to 205 enclose the tr-type G domain; sequence KPHVNIGTIG…ACDDNIPDPV (196 aa). Positions 19 to 26 are G1; the sequence is GHVDHGKT. 19–26 contacts GTP; sequence GHVDHGKT. Mg(2+) is bound at residue Thr26. A G2 region spans residues 62-66; the sequence is GITIN. The G3 stretch occupies residues 83 to 86; the sequence is DAPG. GTP-binding positions include 83 to 87 and 138 to 141; these read DAPGH and NKCD. The interval 138-141 is G4; sequence NKCD. Residues 175 to 177 form a G5 region; it reads SAL.

The protein belongs to the TRAFAC class translation factor GTPase superfamily. Classic translation factor GTPase family. EF-Tu/EF-1A subfamily. In terms of assembly, monomer.

The protein resides in the cytoplasm. The enzyme catalyses GTP + H2O = GDP + phosphate + H(+). GTP hydrolase that promotes the GTP-dependent binding of aminoacyl-tRNA to the A-site of ribosomes during protein biosynthesis. The chain is Elongation factor Tu from Corynebacterium efficiens (strain DSM 44549 / YS-314 / AJ 12310 / JCM 11189 / NBRC 100395).